A 329-amino-acid chain; its full sequence is Ribose-phosphate pyrophosphokinase B (329 aa).

Mg(2+)-binding residues include Asp131, His133, and Glu146. The segment at 227–242 (TGKIAIIIDDIADTCK) is binding of phosphoribosylpyrophosphate.

This sequence belongs to the ribose-phosphate pyrophosphokinase family. It depends on Mg(2+) as a cofactor.

The protein localises to the cytoplasm. It carries out the reaction D-ribose 5-phosphate + ATP = 5-phospho-alpha-D-ribose 1-diphosphate + AMP + H(+). It functions in the pathway metabolic intermediate biosynthesis; 5-phospho-alpha-D-ribose 1-diphosphate biosynthesis; 5-phospho-alpha-D-ribose 1-diphosphate from D-ribose 5-phosphate (route I): step 1/1. The sequence is that of Ribose-phosphate pyrophosphokinase B (prsB) from Dictyostelium discoideum (Social amoeba).